Here is a 494-residue protein sequence, read N- to C-terminus: Alanine--glyoxylate aminotransferase 2-like (494 aa).

Position 291 is an N6-(pyridoxal phosphate)lysine (Lys-291).

Belongs to the class-III pyridoxal-phosphate-dependent aminotransferase family. It depends on pyridoxal 5'-phosphate as a cofactor.

This Drosophila melanogaster (Fruit fly) protein is Alanine--glyoxylate aminotransferase 2-like.